The primary structure comprises 258 residues: Tetratricopeptide repeat protein 33 (258 aa).

3 TPR repeats span residues 59–92 (SKRLKEEGGLLAEDGRQKEALTKWDEAIQLTPGD), 93–126 (AALYEMKAQVLMGVHEIFPAVQAAETAVQRNPHF), and 127–160 (VEAWQTLGRAQLSLGEITMAIRSFQIGLHICPAN). A disordered region spans residues 231 to 258 (SASGSENLSDRKEDKVETNDSKEFIKAR). Over residues 238-258 (LSDRKEDKVETNDSKEFIKAR) the composition is skewed to basic and acidic residues.

This is Tetratricopeptide repeat protein 33 (ttc33) from Xenopus laevis (African clawed frog).